The sequence spans 961 residues: Rho guanine nucleotide exchange factor 2 (961 aa).

The segment at 12 to 59 (GHLFTTISVSGMTMCYACNKSITAKEALICPTCNVTIHNRCKDTLANC) adopts a Phorbol-ester/DAG-type zinc-finger fold. A phosphoserine mark is found at Ser-82, Ser-95, Ser-102, Ser-106, Ser-110, Ser-124, Ser-136, Ser-145, Ser-147, and Ser-150. Residues 104-134 (RQSLLGSRRGRSPLSLAKSVSTTNIAGHFND) form an interaction with DYNLT1 region. The DH domain maps to 209–406 (KQQDVIYELI…KELLSNVDQD (198 aa)). Lys-327 bears the N6-acetyllysine mark. The 100-residue stretch at 446 to 545 (KLIHDGCLLW…WIRVIQQSVR (100 aa)) folds into the PH domain. A coiled-coil region spans residues 561 to 588 (EAYLRRIKMELQQKDRALVELLQEKVGL). A phosphoserine mark is found at Ser-619 and Ser-622. Position 653 is a phosphothreonine; by MAPK1 or MAPK3 (Thr-653). A disordered region spans residues 659-679 (LPVETDSGGNTSPGVTANGEA). 4 positions are modified to phosphoserine: Ser-665, Ser-670, Ser-685, and Ser-756. Over residues 742–761 (PEGPERREKLTRANSRDGEA) the composition is skewed to basic and acidic residues. The segment at 742–770 (PEGPERREKLTRANSRDGEAGRAGAAPVA) is disordered. Positions 772 to 841 (EKQATELALL…RQLAALGHTE (70 aa)) form a coiled coil. The residue at position 860 (Ser-860) is a Phosphoserine; by PAK1 and AURKA. The interval 867-961 (LYLSFTPPQP…RDGEPVASES (95 aa)) is disordered. Position 868 is a phosphotyrosine (Tyr-868). At Ser-870 the chain carries Phosphoserine; by PAK4. Positions 894 to 913 (RPFEDRERQELGSPDERLQD) are enriched in basic and acidic residues. Residues Ser-906, Ser-914, and Ser-915 each carry the phosphoserine modification. Residues 915 to 925 (SDPDTGSEEEG) are compositionally biased toward acidic residues. The residue at position 919 (Thr-919) is a Phosphothreonine. Phosphoserine occurs at positions 921, 927, 928, and 931. Ser-935 carries the phosphoserine; by CDK1 modification.

Found in a complex composed at least of ARHGEF2, NOD2 and RIPK2. Interacts with RIPK2; the interaction mediates tyrosine phosphorylation of RIPK2 by Src kinase CSK. Interacts with RIPK1 and RIPK3. Interacts with YWHAZ/14-3-3 zeta; when phosphorylated at Ser-860. Interacts with the kinases PAK4, AURKA and MAPK1. Interacts with RHOA and RAC1. Interacts with NOD1. Interacts (via the N- terminal zinc finger) with CAPN6 (via domain II). Interacts with DYNLT1. Phosphorylation of Ser-860 by PAK1 induces binding to protein YWHAZ, promoting its relocation to microtubules and the inhibition of its activity. Phosphorylated by AURKA and CDK1 during mitosis, which negatively regulates its activity. Phosphorylation by MAPK1 or MAPK3 increases nucleotide exchange activity. Phosphorylation by PAK4 releases GEF-H1 from the microtubules. Phosphorylated on serine, threonine and tyrosine residues in a RIPK2-dependent manner.

It localises to the cytoplasm. It is found in the cytoskeleton. Its subcellular location is the cell junction. The protein localises to the tight junction. The protein resides in the golgi apparatus. It localises to the spindle. It is found in the cytoplasmic vesicle. In terms of biological role, activates Rho-GTPases by promoting the exchange of GDP for GTP. May be involved in epithelial barrier permeability, cell motility and polarization, dendritic spine morphology, antigen presentation, leukemic cell differentiation, cell cycle regulation, innate immune response, and cancer. Binds Rac-GTPases, but does not seem to promote nucleotide exchange activity toward Rac-GTPases. May stimulate instead the cortical activity of Rac. Inactive toward CDC42, TC10, or Ras-GTPases. Forms an intracellular sensing system along with NOD1 for the detection of microbial effectors during cell invasion by pathogens. Involved in innate immune signaling transduction pathway promoting cytokine IL6/interleukin-6 and TNF-alpha secretion in macrophage upon stimulation by bacterial peptidoglycans; acts as a signaling intermediate between NOD2 receptor and RIPK2 kinase. Contributes to the tyrosine phosphorylation of RIPK2 through Src tyrosine kinase leading to NF-kappaB activation by NOD2. Overexpression activates Rho-, but not Rac-GTPases, and increases paracellular permeability. Involved in neuronal progenitor cell division and differentiation. Involved in the migration of precerebellar neurons. The polypeptide is Rho guanine nucleotide exchange factor 2 (ARHGEF2) (Sus scrofa (Pig)).